The following is a 222-amino-acid chain: Ras-related protein RABA4d (222 aa).

Gly-22 to Thr-29 lines the GTP pocket. The Effector region motif lies at Ser-44–Phe-52. GTP contacts are provided by residues Asp-70–Gln-74, Asn-128–Asp-131, and Ser-158–Ala-159. 2 S-geranylgeranyl cysteine lipidation sites follow: Cys-218 and Cys-219.

Belongs to the small GTPase superfamily. Rab family. Interacts with PI4KB1. In terms of tissue distribution, specifically expressed in pollen and localized to the tips of growing pollen tubes.

It localises to the cytoplasmic vesicle membrane. In terms of biological role, intracellular vesicle trafficking and protein transport. Plays an important role in the regulation of pollen tube tip growth. This Arabidopsis thaliana (Mouse-ear cress) protein is Ras-related protein RABA4d (RABA4D).